A 206-amino-acid polypeptide reads, in one-letter code: Recombination protein RecR (206 aa).

The C4-type zinc finger occupies 60 to 75; it reads CARCNTFCEGGLCDIC. Residues 83-178 enclose the Toprim domain; it reads RRLMVVHMPA…KVSRLSQGIP (96 aa).

The protein belongs to the RecR family.

Its function is as follows. May play a role in DNA repair. It seems to be involved in an RecBC-independent recombinational process of DNA repair. It may act with RecF and RecO. The polypeptide is Recombination protein RecR (Neisseria gonorrhoeae (strain NCCP11945)).